We begin with the raw amino-acid sequence, 121 residues long: Putative iron-sulfur cluster insertion protein ErpA (121 aa).

The iron-sulfur cluster site is built by Cys-49, Cys-113, and Cys-115.

The protein belongs to the HesB/IscA family. As to quaternary structure, homodimer. It depends on iron-sulfur cluster as a cofactor.

In terms of biological role, required for insertion of 4Fe-4S clusters. The protein is Putative iron-sulfur cluster insertion protein ErpA of Nitrosomonas eutropha (strain DSM 101675 / C91 / Nm57).